Here is a 281-residue protein sequence, read N- to C-terminus: MTRLRTAIEAATATLAAAGVATPRIDAELLAAHSLGVDRGRLMFVDDPDPEALAAFEHLVAARAKRIPLQHLVGTAAFGPLTLEVGPGVFIPRPETESLLEWAVAQQLPRDAVIVDLCTGTGALALALAQHRPQARVIAVEDSPAALEYARCNAAGTSVEVLAADVTAPDLLPELDGAVDLVVSNPPYIPEGAELDPEVADHDPAHALFGGPDGMAVIRPIVALAARWLRDGGKCAVEHDDTTSARTVEAFTHDGNFTDVTARHDLTGRPRFVTATRIARS.

S-adenosyl-L-methionine contacts are provided by Glu141 and Asn185. 185 to 188 contributes to the substrate binding site; sequence NPPY.

The protein belongs to the protein N5-glutamine methyltransferase family. PrmC subfamily.

The catalysed reaction is L-glutaminyl-[peptide chain release factor] + S-adenosyl-L-methionine = N(5)-methyl-L-glutaminyl-[peptide chain release factor] + S-adenosyl-L-homocysteine + H(+). Methylates the class 1 translation termination release factors RF1/PrfA and RF2/PrfB on the glutamine residue of the universally conserved GGQ motif. The sequence is that of Release factor glutamine methyltransferase from Mycolicibacterium smegmatis (strain ATCC 700084 / mc(2)155) (Mycobacterium smegmatis).